Reading from the N-terminus, the 128-residue chain is Cytochrome c-type biogenesis protein CcmE (128 aa).

Residues 1-8 (MQKRVRNR) lie on the Cytoplasmic side of the membrane. The chain crosses the membrane as a helical; Signal-anchor for type II membrane protein span at residues 9 to 29 (LITIIICFCSACLGISIILYN). Over 30-128 (LEKNIVFFLP…KHDENYRPPQ (99 aa)) the chain is Extracellular. Heme-binding residues include histidine 120 and tyrosine 124.

Belongs to the CcmE/CycJ family.

Its subcellular location is the cell membrane. In terms of biological role, heme chaperone required for the biogenesis of c-type cytochromes. Transiently binds heme delivered by CcmC and transfers the heme to apo-cytochromes in a process facilitated by CcmF and CcmH. The chain is Cytochrome c-type biogenesis protein CcmE from Rickettsia africae (strain ESF-5).